A 154-amino-acid chain; its full sequence is Transcriptional regulator MraZ (154 aa).

2 consecutive SpoVT-AbrB domains span residues 6–53 (NSEA…PENV) and 83–126 (VEVI…SKEI).

It belongs to the MraZ family. Forms oligomers.

The protein resides in the cytoplasm. It is found in the nucleoid. The chain is Transcriptional regulator MraZ from Phocaeicola vulgatus (strain ATCC 8482 / DSM 1447 / JCM 5826 / CCUG 4940 / NBRC 14291 / NCTC 11154) (Bacteroides vulgatus).